The sequence spans 315 residues: tRNA dimethylallyltransferase (315 aa).

13-20 (GPTASGKT) contacts ATP. 15–20 (TASGKT) is a binding site for substrate. Interaction with substrate tRNA regions lie at residues 38 to 41 (DSAL), 162 to 166 (QRLSR), 243 to 248 (RCVGYR), and 276 to 283 (KRQITWLR).

This sequence belongs to the IPP transferase family. In terms of assembly, monomer. It depends on Mg(2+) as a cofactor.

It carries out the reaction adenosine(37) in tRNA + dimethylallyl diphosphate = N(6)-dimethylallyladenosine(37) in tRNA + diphosphate. Its function is as follows. Catalyzes the transfer of a dimethylallyl group onto the adenine at position 37 in tRNAs that read codons beginning with uridine, leading to the formation of N6-(dimethylallyl)adenosine (i(6)A). In Vibrio vulnificus (strain YJ016), this protein is tRNA dimethylallyltransferase.